We begin with the raw amino-acid sequence, 165 residues long: Phosphopantetheine adenylyltransferase (165 aa).

Ser-10 serves as a coordination point for substrate. ATP is bound by residues 10–11 and His-18; that span reads SF. Positions 42, 79, and 93 each coordinate substrate. ATP is bound by residues 94–96, Glu-104, and 129–135; these read GLR and VRPITAT.

It belongs to the bacterial CoaD family. As to quaternary structure, homohexamer. Mg(2+) is required as a cofactor.

It localises to the cytoplasm. It catalyses the reaction (R)-4'-phosphopantetheine + ATP + H(+) = 3'-dephospho-CoA + diphosphate. The protein operates within cofactor biosynthesis; coenzyme A biosynthesis; CoA from (R)-pantothenate: step 4/5. In terms of biological role, reversibly transfers an adenylyl group from ATP to 4'-phosphopantetheine, yielding dephospho-CoA (dPCoA) and pyrophosphate. This is Phosphopantetheine adenylyltransferase from Rhodopseudomonas palustris (strain BisA53).